The chain runs to 27 residues: Small ribosomal subunit protein bTHX (27 aa).

Over residues 1 to 13 (MGKGDRRTRRGKI) the composition is skewed to basic residues. The interval 1–27 (MGKGDRRTRRGKIWRGTYGKYRPRKKK) is disordered.

It belongs to the bacterial ribosomal protein bTHX family. As to quaternary structure, part of the 30S ribosomal subunit.

Its function is as follows. Binds at the top of the head of the 30S subunit. It stabilizes a number of different RNA elements and thus is important for subunit structure. This Thermus aquaticus protein is Small ribosomal subunit protein bTHX (rpsU).